A 20-amino-acid polypeptide reads, in one-letter code: Cytochrome P450IIB (20 aa).

It belongs to the cytochrome P450 family. It depends on heme as a cofactor.

The protein resides in the endoplasmic reticulum membrane. Its subcellular location is the microsome membrane. It catalyses the reaction an organic molecule + reduced [NADPH--hemoprotein reductase] + O2 = an alcohol + oxidized [NADPH--hemoprotein reductase] + H2O + H(+). Cytochromes P450 are a group of heme-thiolate monooxygenases. In liver microsomes, this enzyme is involved in an NADPH-dependent electron transport pathway. This isozyme is active upon P.nitroanisole, aniline, D-benzphetamine, delta(9)-tetrahydrocannabinol (THC) and strychnine. This Cavia porcellus (Guinea pig) protein is Cytochrome P450IIB.